The following is a 225-amino-acid chain: Ribose-5-phosphate isomerase A (225 aa).

Residues 1 to 20 are disordered; it reads MKQSGGTEAQKRRAGKQAAD. Substrate-binding positions include 32 to 35, 86 to 89, and 98 to 101; these read TGST, DGAD, and KGGG. Glutamate 107 (proton acceptor) is an active-site residue. Position 125 (lysine 125) interacts with substrate.

It belongs to the ribose 5-phosphate isomerase family. As to quaternary structure, homodimer.

It catalyses the reaction aldehydo-D-ribose 5-phosphate = D-ribulose 5-phosphate. Its pathway is carbohydrate degradation; pentose phosphate pathway; D-ribose 5-phosphate from D-ribulose 5-phosphate (non-oxidative stage): step 1/1. In terms of biological role, catalyzes the reversible conversion of ribose-5-phosphate to ribulose 5-phosphate. The protein is Ribose-5-phosphate isomerase A of Natronomonas pharaonis (strain ATCC 35678 / DSM 2160 / CIP 103997 / JCM 8858 / NBRC 14720 / NCIMB 2260 / Gabara) (Halobacterium pharaonis).